A 245-amino-acid chain; its full sequence is Octanoyltransferase (245 aa).

The BPL/LPL catalytic domain maps to Q54 to I242. Substrate contacts are provided by residues R93–H100, A173–G175, and G186–S188. C204 (acyl-thioester intermediate) is an active-site residue.

The protein belongs to the LipB family.

The protein localises to the cytoplasm. It catalyses the reaction octanoyl-[ACP] + L-lysyl-[protein] = N(6)-octanoyl-L-lysyl-[protein] + holo-[ACP] + H(+). Its pathway is protein modification; protein lipoylation via endogenous pathway; protein N(6)-(lipoyl)lysine from octanoyl-[acyl-carrier-protein]: step 1/2. Catalyzes the transfer of endogenously produced octanoic acid from octanoyl-acyl-carrier-protein onto the lipoyl domains of lipoate-dependent enzymes. Lipoyl-ACP can also act as a substrate although octanoyl-ACP is likely to be the physiological substrate. In Bartonella quintana (strain Toulouse) (Rochalimaea quintana), this protein is Octanoyltransferase.